We begin with the raw amino-acid sequence, 308 residues long: tRNA dimethylallyltransferase (308 aa).

11–18 lines the ATP pocket; that stretch reads GSTATGKS. 13-18 provides a ligand contact to substrate; that stretch reads TATGKS. The segment at 36 to 39 is interaction with substrate tRNA; sequence DSVQ.

Belongs to the IPP transferase family. As to quaternary structure, monomer. Mg(2+) serves as cofactor.

The catalysed reaction is adenosine(37) in tRNA + dimethylallyl diphosphate = N(6)-dimethylallyladenosine(37) in tRNA + diphosphate. In terms of biological role, catalyzes the transfer of a dimethylallyl group onto the adenine at position 37 in tRNAs that read codons beginning with uridine, leading to the formation of N6-(dimethylallyl)adenosine (i(6)A). This is tRNA dimethylallyltransferase from Bdellovibrio bacteriovorus (strain ATCC 15356 / DSM 50701 / NCIMB 9529 / HD100).